We begin with the raw amino-acid sequence, 80 residues long: Putative membrane protein insertion efficiency factor (80 aa).

The interval 61-80 (KTGKDPVPDHFSLKRNQEGE) is disordered. The span at 62-80 (TGKDPVPDHFSLKRNQEGE) shows a compositional bias: basic and acidic residues.

It belongs to the UPF0161 family.

It is found in the cell membrane. Functionally, could be involved in insertion of integral membrane proteins into the membrane. This is Putative membrane protein insertion efficiency factor from Streptococcus pneumoniae (strain 70585).